The primary structure comprises 182 residues: Adenine phosphoribosyltransferase (182 aa).

The protein belongs to the purine/pyrimidine phosphoribosyltransferase family. Homodimer.

It is found in the cytoplasm. It carries out the reaction AMP + diphosphate = 5-phospho-alpha-D-ribose 1-diphosphate + adenine. It functions in the pathway purine metabolism; AMP biosynthesis via salvage pathway; AMP from adenine: step 1/1. In terms of biological role, catalyzes a salvage reaction resulting in the formation of AMP, that is energically less costly than de novo synthesis. The polypeptide is Adenine phosphoribosyltransferase (Streptomyces galbus).